A 184-amino-acid chain; its full sequence is Mediator of RNA polymerase II transcription subunit 11 (184 aa).

The span at 142 to 152 (ATTKQETNINN) shows a compositional bias: polar residues. The interval 142-184 (ATTKQETNINNEDSEKEKQENITAIETKKESSENEDEDFDMIA) is disordered. A compositionally biased stretch (basic and acidic residues) spans 154-173 (DSEKEKQENITAIETKKESS). The segment covering 174 to 184 (ENEDEDFDMIA) has biased composition (acidic residues).

This sequence belongs to the Mediator complex subunit 11 family. In terms of assembly, component of the Mediator complex.

The protein localises to the nucleus. Functionally, component of the Mediator complex, a coactivator involved in the regulated transcription of nearly all RNA polymerase II-dependent genes. Mediator functions as a bridge to convey information from gene-specific regulatory proteins to the basal RNA polymerase II transcription machinery. Mediator is recruited to promoters by direct interactions with regulatory proteins and serves as a scaffold for the assembly of a functional pre-initiation complex with RNA polymerase II and the general transcription factors. The protein is Mediator of RNA polymerase II transcription subunit 11 (MED11) of Debaryomyces hansenii (strain ATCC 36239 / CBS 767 / BCRC 21394 / JCM 1990 / NBRC 0083 / IGC 2968) (Yeast).